A 452-amino-acid polypeptide reads, in one-letter code: 5'-nucleotidase domain-containing protein 1 (452 aa).

The active-site Nucleophile is Asp16. Residues Asp16 and Asp18 each contribute to the Mg(2+) site. Residue Asp18 is the Proton donor of the active site. N6-acetyllysine is present on Lys171. Residue Asp313 coordinates Mg(2+). The span at 339–361 (GDKDGKPEESEPEEKKGKYEGSK) shows a compositional bias: basic and acidic residues. The interval 339–365 (GDKDGKPEESEPEEKKGKYEGSKAKPL) is disordered.

It belongs to the 5'(3')-deoxyribonucleotidase family.

The polypeptide is 5'-nucleotidase domain-containing protein 1 (NT5DC1) (Bos taurus (Bovine)).